A 138-amino-acid chain; its full sequence is MRTLWIVAVLLLGVEGNLWQFREMIKEATGKEPLTTYLFYACYCGWGGRGEPKDATDRCCFVHDCCYGKLTACSPKLDMYTYSQKNEDIVCGGDDPCKKEICECDKAAAICFLNNLGTYNEEYNNYRKSRCIEESPKC.

The first 16 residues, 1-16 (MRTLWIVAVLLLGVEG), serve as a signal peptide directing secretion. Disulfide bonds link Cys-42–Cys-131, Cys-44–Cys-60, Cys-59–Cys-111, Cys-65–Cys-138, Cys-66–Cys-104, Cys-73–Cys-97, and Cys-91–Cys-102. The Ca(2+) site is built by Tyr-43, Gly-45, and Gly-47. His-63 is a catalytic residue. Ca(2+) is bound at residue Asp-64. Asp-105 is a catalytic residue.

The protein belongs to the phospholipase A2 family. Group II subfamily. D49 sub-subfamily. Ca(2+) serves as cofactor. As to expression, expressed by the venom gland.

The protein localises to the secreted. It catalyses the reaction a 1,2-diacyl-sn-glycero-3-phosphocholine + H2O = a 1-acyl-sn-glycero-3-phosphocholine + a fatty acid + H(+). Snake venom phospholipase A2 (PLA2) that displays edema-inducing activities, exhibits indirect hemolytic activity, and inhibits ADP-induced platelet aggregation. PLA2 catalyzes the calcium-dependent hydrolysis of the 2-acyl groups in 3-sn-phosphoglycerides. In Protobothrops mucrosquamatus (Taiwan habu), this protein is Acidic phospholipase A2 2.